A 215-amino-acid chain; its full sequence is 23.2 kDa heat shock protein (215 aa).

Residues methionine 1–glycine 27 form the signal peptide. One can recognise a sHSP domain in the interval aspartate 69 to alanine 189. The interval valine 183 to leucine 215 is disordered. Over residues glycine 205–leucine 215 the composition is skewed to polar residues.

It belongs to the small heat shock protein (HSP20) family. In terms of assembly, may form oligomeric structures.

The protein resides in the endoplasmic reticulum. In Oryza sativa subsp. japonica (Rice), this protein is 23.2 kDa heat shock protein (HSP23.2).